Reading from the N-terminus, the 520-residue chain is Anthranilate synthase component 1 (520 aa).

Residues serine 40 and proline 291–methionine 293 contribute to the L-tryptophan site. Glycine 328–threonine 329 serves as a coordination point for chorismate. Position 361 (glutamate 361) interacts with Mg(2+). Chorismate-binding positions include tyrosine 449, arginine 469, glycine 483 to glycine 485, and glycine 485. Position 498 (glutamate 498) interacts with Mg(2+).

Belongs to the anthranilate synthase component I family. As to quaternary structure, heterotetramer consisting of two non-identical subunits: a beta subunit (TrpG) and a large alpha subunit (TrpE). Mg(2+) serves as cofactor.

The enzyme catalyses chorismate + L-glutamine = anthranilate + pyruvate + L-glutamate + H(+). It participates in amino-acid biosynthesis; L-tryptophan biosynthesis; L-tryptophan from chorismate: step 1/5. Feedback inhibited by tryptophan. In terms of biological role, part of a heterotetrameric complex that catalyzes the two-step biosynthesis of anthranilate, an intermediate in the biosynthesis of L-tryptophan. In the first step, the glutamine-binding beta subunit (TrpG) of anthranilate synthase (AS) provides the glutamine amidotransferase activity which generates ammonia as a substrate that, along with chorismate, is used in the second step, catalyzed by the large alpha subunit of AS (TrpE) to produce anthranilate. In the absence of TrpG, TrpE can synthesize anthranilate directly from chorismate and high concentrations of ammonia. In Buchnera aphidicola subsp. Pemphigus spyrothecae, this protein is Anthranilate synthase component 1 (trpE).